A 367-amino-acid chain; its full sequence is tRNA/tmRNA (uracil-C(5))-methyltransferase (367 aa).

S-adenosyl-L-methionine contacts are provided by Gln182, Tyr210, Asn215, Glu231, and Asp293. Cys318 acts as the Nucleophile in catalysis. Catalysis depends on Glu352, which acts as the Proton acceptor.

It belongs to the class I-like SAM-binding methyltransferase superfamily. RNA M5U methyltransferase family. TrmA subfamily.

The enzyme catalyses uridine(54) in tRNA + S-adenosyl-L-methionine = 5-methyluridine(54) in tRNA + S-adenosyl-L-homocysteine + H(+). It carries out the reaction uridine(341) in tmRNA + S-adenosyl-L-methionine = 5-methyluridine(341) in tmRNA + S-adenosyl-L-homocysteine + H(+). Its function is as follows. Dual-specificity methyltransferase that catalyzes the formation of 5-methyluridine at position 54 (m5U54) in all tRNAs, and that of position 341 (m5U341) in tmRNA (transfer-mRNA). In Neisseria meningitidis serogroup C (strain 053442), this protein is tRNA/tmRNA (uracil-C(5))-methyltransferase.